The chain runs to 259 residues: Transcription factor bHLH125 (259 aa).

The bHLH domain occupies 73–125 (SKKMKHRDIERQRRQEVSSLFKRLRTLLPFQYIQGKRSTSDHIVQAVNYIKDL).

In terms of assembly, homodimer.

It is found in the nucleus. This chain is Transcription factor bHLH125 (BHLH125), found in Arabidopsis thaliana (Mouse-ear cress).